An 814-amino-acid chain; its full sequence is Leucine--tRNA ligase (814 aa).

A 'HIGH' region motif is present at residues proline 42–histidine 52. The 'KMSKS' region signature appears at lysine 582 to serine 586. Residue lysine 585 participates in ATP binding.

Belongs to the class-I aminoacyl-tRNA synthetase family.

The protein localises to the cytoplasm. It carries out the reaction tRNA(Leu) + L-leucine + ATP = L-leucyl-tRNA(Leu) + AMP + diphosphate. This chain is Leucine--tRNA ligase, found in Herpetosiphon aurantiacus (strain ATCC 23779 / DSM 785 / 114-95).